We begin with the raw amino-acid sequence, 401 residues long: Acetate kinase (401 aa).

Asn-10 is a binding site for Mg(2+). Lys-17 lines the ATP pocket. Arg-91 provides a ligand contact to substrate. The active-site Proton donor/acceptor is the Asp-150. ATP-binding positions include 210–214 (HLGNG), 285–287 (DCR), and 333–337 (GIGEN). Glu-387 is a binding site for Mg(2+).

This sequence belongs to the acetokinase family. In terms of assembly, homodimer. Requires Mg(2+) as cofactor. It depends on Mn(2+) as a cofactor.

The protein localises to the cytoplasm. It catalyses the reaction acetate + ATP = acetyl phosphate + ADP. It participates in metabolic intermediate biosynthesis; acetyl-CoA biosynthesis; acetyl-CoA from acetate: step 1/2. Functionally, catalyzes the formation of acetyl phosphate from acetate and ATP. Can also catalyze the reverse reaction. This chain is Acetate kinase, found in Pasteurella multocida (strain Pm70).